We begin with the raw amino-acid sequence, 293 residues long: uncharacterized protein (293 aa).

Residues 65–89 (LQKYLENIKNKKLNLNKQSNNQTNN) adopt a coiled-coil conformation. A disordered region spans residues 81-112 (KQSNNQTNNQTNNQTNNQTNNQTNNIRPQINN).

The protein resides in the virion. This is an uncharacterized protein from Acanthamoeba polyphaga mimivirus (APMV).